A 527-amino-acid polypeptide reads, in one-letter code: Glutamate--cysteine ligase (527 aa).

This sequence belongs to the glutamate--cysteine ligase type 1 family. Type 1 subfamily.

The catalysed reaction is L-cysteine + L-glutamate + ATP = gamma-L-glutamyl-L-cysteine + ADP + phosphate + H(+). The protein operates within sulfur metabolism; glutathione biosynthesis; glutathione from L-cysteine and L-glutamate: step 1/2. This chain is Glutamate--cysteine ligase, found in Pseudomonas aeruginosa (strain LESB58).